The chain runs to 202 residues: Probable thymidylate kinase (202 aa).

Position 13-20 (13-20) interacts with ATP; it reads GIDGSGKT.

This sequence belongs to the thymidylate kinase family.

The enzyme catalyses dTMP + ATP = dTDP + ADP. The chain is Probable thymidylate kinase from Picrophilus torridus (strain ATCC 700027 / DSM 9790 / JCM 10055 / NBRC 100828 / KAW 2/3).